The following is a 1018-amino-acid chain: Collagen, type I, alpha 1a (1018 aa).

Residues 1–10 (QMSAGYDDKS) are compositionally biased toward basic and acidic residues. The segment at 1–991 (QMSAGYDDKS…SGEYWLDPDQ (991 aa)) is disordered. Residues 13–30 (MPVPGPMGPMGPRGPPGS) are compositionally biased toward pro residues. Residues 31–58 (PGASGPQGFTGPPGEPGEAGPSGAMGPR) show a composition bias toward low complexity. Over residues 67-81 (NGEDGESGKPGRGGE) the composition is skewed to basic and acidic residues. A compositionally biased stretch (low complexity) spans 126-136 (PRGNDGAAGAA). Residues 138 to 151 (PPGPTGPAGPPGFP) are compositionally biased toward pro residues. The segment covering 152-170 (GGPGAKGDAGAQGGRGPEG) has biased composition (gly residues). Low complexity-rich tracts occupy residues 171 to 214 (PAGA…AGAP) and 223 to 261 (SGPQ…APGV). Over residues 284–296 (GARGGPGGRGFPG) the composition is skewed to gly residues. 4 stretches are compositionally biased toward low complexity: residues 370-385 (VGAR…PGPK), 424-442 (AGPA…PGFQ), 452-510 (LPGE…QGMP), and 543-558 (RGLT…AGAT). Positions 568–577 (GPVGPGGARG) are enriched in gly residues. Low complexity-rich tracts occupy residues 591 to 627 (AGFA…AGPT) and 641 to 663 (PKGA…AGRV). Pro residues predominate over residues 665-677 (PPGPSGNPGPPGP). Composition is skewed to low complexity over residues 701-746 (EVGA…XXPG) and 775-795 (PGLA…NEGS). Pro residues predominate over residues 819–829 (APGPPGAPGPV). A compositionally biased stretch (low complexity) spans 843–862 (PAGPAGSAGPAGPRGPAGAP). The segment covering 865-876 (RGDKGESGEAGE) has biased composition (basic and acidic residues). The span at 889–925 (SGSSGEQGPAGAAGPAGPRGPAGSAGSPGKDGMSGLP) shows a compositional bias: low complexity. The Fibrillar collagen NC1 domain maps to 932–1018 (GPRGGFDLGF…CTSHTGTWGK (87 aa)). Basic and acidic residues predominate over residues 948–959 (KAPDPFRDRDLE). Residues 963–973 (TLKSLSQQLEQ) show a composition bias toward polar residues.

It belongs to the fibrillar collagen family.

Its subcellular location is the secreted. The protein localises to the extracellular space. It localises to the extracellular matrix. In Epinephelus costae (Goldblotch grouper), this protein is Collagen, type I, alpha 1a.